The primary structure comprises 179 residues: Peptidyl-prolyl cis-trans isomerase A (179 aa).

The 164-residue stretch at 15 to 178 (FFDITIGGVE…KPVVIANCGQ (164 aa)) folds into the PPIase cyclophilin-type domain.

It belongs to the cyclophilin-type PPIase family.

The protein localises to the cytoplasm. It localises to the cytosol. The enzyme catalyses [protein]-peptidylproline (omega=180) = [protein]-peptidylproline (omega=0). With respect to regulation, binds cyclosporin A (CsA). CsA mediates some of its effects via an inhibitory action on PPIase. Functionally, PPIase that catalyzes the cis-trans isomerization of proline imidic peptide bonds in oligopeptides and may therefore assist protein folding. This chain is Peptidyl-prolyl cis-trans isomerase A (ppiA), found in Dictyostelium discoideum (Social amoeba).